A 104-amino-acid chain; its full sequence is Large ribosomal subunit protein uL24 (104 aa).

Belongs to the universal ribosomal protein uL24 family. In terms of assembly, part of the 50S ribosomal subunit.

In terms of biological role, one of two assembly initiator proteins, it binds directly to the 5'-end of the 23S rRNA, where it nucleates assembly of the 50S subunit. Its function is as follows. One of the proteins that surrounds the polypeptide exit tunnel on the outside of the subunit. The protein is Large ribosomal subunit protein uL24 of Pseudomonas entomophila (strain L48).